The sequence spans 426 residues: Serine hydroxymethyltransferase 1 (426 aa).

Residues L118 and 122-124 (GHL) each bind (6S)-5,6,7,8-tetrahydrofolate. K227 carries the post-translational modification N6-(pyridoxal phosphate)lysine.

It belongs to the SHMT family. Homodimer. Requires pyridoxal 5'-phosphate as cofactor.

It localises to the cytoplasm. It carries out the reaction (6R)-5,10-methylene-5,6,7,8-tetrahydrofolate + glycine + H2O = (6S)-5,6,7,8-tetrahydrofolate + L-serine. It participates in one-carbon metabolism; tetrahydrofolate interconversion. Its pathway is amino-acid biosynthesis; glycine biosynthesis; glycine from L-serine: step 1/1. In terms of biological role, catalyzes the reversible interconversion of serine and glycine with tetrahydrofolate (THF) serving as the one-carbon carrier. This reaction serves as the major source of one-carbon groups required for the biosynthesis of purines, thymidylate, methionine, and other important biomolecules. Also exhibits THF-independent aldolase activity toward beta-hydroxyamino acids, producing glycine and aldehydes, via a retro-aldol mechanism. In Mycobacterium bovis (strain ATCC BAA-935 / AF2122/97), this protein is Serine hydroxymethyltransferase 1.